The chain runs to 717 residues: Delta-1-pyrroline-5-carboxylate synthase A (717 aa).

Positions 1 to 296 are glutamate 5-kinase; that stretch reads MEELDRSRAF…WAPITDSNAR (296 aa). Positions 60, 157, and 176 each coordinate substrate. ATP contacts are provided by residues 196 to 197 and 236 to 242; these read SD and RGGMTAK. A gamma-glutamyl phosphate reductase region spans residues 297–717; sequence DMAVAARESS…YTHQDIPIQA (421 aa).

This sequence in the N-terminal section; belongs to the glutamate 5-kinase family. In the C-terminal section; belongs to the gamma-glutamyl phosphate reductase family.

The catalysed reaction is L-glutamate + ATP = L-glutamyl 5-phosphate + ADP. The enzyme catalyses L-glutamate 5-semialdehyde + phosphate + NADP(+) = L-glutamyl 5-phosphate + NADPH + H(+). It functions in the pathway amino-acid biosynthesis; L-proline biosynthesis; L-glutamate 5-semialdehyde from L-glutamate: step 1/2. It participates in amino-acid biosynthesis; L-proline biosynthesis; L-glutamate 5-semialdehyde from L-glutamate: step 2/2. P5CS plays a key role in proline biosynthesis, leading to osmoregulation in plants. This chain is Delta-1-pyrroline-5-carboxylate synthase A (P5CSA), found in Arabidopsis thaliana (Mouse-ear cress).